A 1174-amino-acid polypeptide reads, in one-letter code: K(+) efflux antiporter 2, chloroplastic (1174 aa).

The N-terminal 57 residues, 1–57 (MDFASSVQRQSMFHGGADFASYCLPNRMISAKLCPKGLGGTRFWDPMIDSKVRSAIR), are a transit peptide targeting the chloroplast. Topologically, residues 58 to 565 (SKRNVSYRSS…MFPQQEVNEE (508 aa)) are stromal. The interval 119–141 (GSDDREVTFSKEEKDTREQDSAP) is disordered. Residues 142-350 (SLEELRDLLN…ALQRAEKTLF (209 aa)) are a coiled coil. An N6-acetyllysine; by NSI modification is found at Lys170. Residues 420–448 (EAEGEAEKSKNVVLTKKQEVQKDLPRESS) show a composition bias toward basic and acidic residues. The disordered stretch occupies residues 420–457 (EAEGEAEKSKNVVLTKKQEVQKDLPRESSSHNGTKTSL). The chain crosses the membrane as a helical span at residues 566–586 (EASLLDVLWLLLASVIFVPLF). The Chloroplast intermembrane segment spans residues 587 to 592 (QKIPGG). The chain crosses the membrane as a helical span at residues 593–613 (SPVLGYLAAGILIGPYGLSII). Topologically, residues 614-620 (RNVHGTK) are stromal. Residues 621-641 (AIAEFGVVFLLFNIGLELSVE) form a helical membrane-spanning segment. Residues 642–648 (RLSSMKK) lie on the Chloroplast intermembrane side of the membrane. A helical transmembrane segment spans residues 649-669 (YVFGLGSAQVLVTAAVIGLIT). The Stromal portion of the chain corresponds to 670 to 678 (HYVAGQAGP). A helical transmembrane segment spans residues 679 to 699 (AAIVIGNGLALSSTAVVLQVL). The Chloroplast intermembrane segment spans residues 700-713 (QERGESTSRHGRAT). A helical transmembrane segment spans residues 714–734 (FSVLLFQDLAVVVLLILIPLI). The Stromal portion of the chain corresponds to 735–746 (SPNSSKGGIGFQ). Residues 747-767 (AIAEALGLAAIKAAVAITGII) traverse the membrane as a helical segment. Over 768-807 (AGGRLLLRPIYKQIAENRNAEIFSANTLLVILGTSLLTAR) the chain is Chloroplast intermembrane. Residues 808–828 (AGLSMALGAFLAGLLLAETEF) traverse the membrane as a helical segment. Residues 829–841 (SLQVESDIAPYRG) lie on the Stromal side of the membrane. Residues 842–862 (LLLGLFFMTVGMSIDPKLLLA) traverse the membrane as a helical segment. Topologically, residues 863–865 (NFP) are chloroplast intermembrane. The helical transmembrane segment at 866-886 (LIMGTLGLLLVGKTILVVIIG) threads the bilayer. Residues 887–898 (KLFGISIISAVR) are Stromal-facing. A helical membrane pass occupies residues 899-919 (VGLLLAPGGEFAFVAFGEAVN). Over 920–928 (QGIMTPQLS) the chain is Chloroplast intermembrane. Residues 929–949 (SLLFLVVGISMALTPWLAAGG) traverse the membrane as a helical segment. At 950 to 1174 (QLIASRFELQ…NQIIEGTLAI (225 aa)) the chain is on the stromal side. The 118-residue stretch at 975–1092 (QGHIIICGFG…EKAGATAVVP (118 aa)) folds into the RCK N-terminal domain. Residues 1141-1174 (SLGYGFSRSTSKPKPPSPSETSDDNQIIEGTLAI) form a disordered region.

It belongs to the monovalent cation:proton antiporter 2 (CPA2) transporter (TC 2.A.37) family. KEA (TC 2.A.37.1) subfamily. Acetylated at Lys-170 by the stromal acetyltransferase enzyme NSI. Detected in leaves, stems and flowers. Expressed in shoots and roots. Mainly localized to leaf veins, hypocotyls, mesophylls and guard cells. Accumulates at high levels in small and dividing plastids (at protein level).

Its subcellular location is the plastid. It is found in the chloroplast inner membrane. It localises to the plastid inner membrane. It carries out the reaction K(+)(in) + H(+)(out) = K(+)(out) + H(+)(in). Repressed by sodium ions Na(+). Its function is as follows. Electroneutral K(+)/H(+) efflux antiporter modulating monovalent cation and pH homeostasis in plastids, especially during plastid division and thylakoid membrane formation. Transports K(+) and Cs(+) preferentially relative to Na(+) or Li(+). May function in osmotic adjustment. Collaboratively with KEA1, adjusts alkaline stromal pH upon light to dark transitions in plastids. Together with KEA1, critical for chloroplast development, including chloroplast RNA-metabolism (e.g. rRNA maturation, polysome loading and RNA-protein interactions) and plastid gene expression (PGE), ion homeostasis, and photosynthesis. Contributes, during early seedling development, to the regulation of photosynthesis and abscisic acid- (ABA-) mediated primary root growth in a sucrose-dependent manner. Involved in the regulation of reactive oxygen and nitrogen species (ROS and RNS) metabolism. Required in roots for rapid hyperosmotic-induced Ca(2+) responses and for osmo-sensory potentiation in hyperosmotic conditions. May counteract resilience to drought and salt stress, involving photorespiratory pathway and stomata closure. The polypeptide is K(+) efflux antiporter 2, chloroplastic (Arabidopsis thaliana (Mouse-ear cress)).